The sequence spans 95 residues: KLESIGYLYEPLSEEYRRVIDFSDMKNLRSMFNKITIHVSDKCIQVNKGYLSDFVTSLIRLSDSDINTYDSFDITYIDPRRHITWNNILSILNEK.

This sequence belongs to the chordopoxvirinae J1 family. In terms of assembly, homodimer. Part of a complex composed of A30, G7, F10 kinase, A15, D2, D3, and J1. Interacts with A45.

Its subcellular location is the virion. It is found in the host cytoplasm. Late protein which is a part of a large complex required for early virion morphogenesis. This complex participates in the formation of virosomes and the incorporation of virosomal contents into nascent immature virions. J1 protein is required for DNA packaging during immature virions (IV) formation. The chain is Protein J1 homolog from Sus scrofa (Pig).